The primary structure comprises 776 residues: Protocadherin beta-16 (776 aa).

The first 28 residues, 1-28, serve as a signal peptide directing secretion; that stretch reads MEIGWMHNRRQRQVLVFFVLLSLSGAGA. At 29-690 the chain is on the extracellular side; sequence ELGSYSVVEE…TQANSLTVYL (662 aa). Cadherin domains are found at residues 35–133, 138–242, 247–347, 352–451, and 456–561; these read VVEE…SPMF, MILK…APEF, YKVQ…PPQV, LTSP…APTF, and YTLF…SPFV. 2 N-linked (GlcNAc...) asparagine glycosylation sites follow: N418 and N436. An N-linked (GlcNAc...) asparagine glycan is attached at N567. Residues 568–671 enclose the Cadherin 6 domain; it reads GSAPCTELVP…LVDGFSQPFL (104 aa). A helical transmembrane segment spans residues 691–711; the sequence is VVALASVSSLFLFSVLLFVAV. The Cytoplasmic portion of the chain corresponds to 712–776; it reads RLCRRSRAAS…LKPIIPNFSP (65 aa).

Its subcellular location is the membrane. Functionally, potential calcium-dependent cell-adhesion protein. May be involved in the establishment and maintenance of specific neuronal connections in the brain. The sequence is that of Protocadherin beta-16 from Homo sapiens (Human).